The sequence spans 297 residues: Formamidopyrimidine-DNA glycosylase (297 aa).

The Schiff-base intermediate with DNA role is filled by Pro-2. The active-site Proton donor is Glu-3. The active-site Proton donor; for beta-elimination activity is the Lys-58. The DNA site is built by His-106, Arg-125, and Arg-168. The FPG-type zinc-finger motif lies at 259-295 (RVYDREGLACTARGCRGRVRRIVQAGRSTFYCETCQP). The active-site Proton donor; for delta-elimination activity is Arg-285.

It belongs to the FPG family. As to quaternary structure, monomer. Requires Zn(2+) as cofactor.

It carries out the reaction Hydrolysis of DNA containing ring-opened 7-methylguanine residues, releasing 2,6-diamino-4-hydroxy-5-(N-methyl)formamidopyrimidine.. The enzyme catalyses 2'-deoxyribonucleotide-(2'-deoxyribose 5'-phosphate)-2'-deoxyribonucleotide-DNA = a 3'-end 2'-deoxyribonucleotide-(2,3-dehydro-2,3-deoxyribose 5'-phosphate)-DNA + a 5'-end 5'-phospho-2'-deoxyribonucleoside-DNA + H(+). Its function is as follows. Involved in base excision repair of DNA damaged by oxidation or by mutagenic agents. Acts as a DNA glycosylase that recognizes and removes damaged bases. Has a preference for oxidized purines, such as 7,8-dihydro-8-oxoguanine (8-oxoG). Has AP (apurinic/apyrimidinic) lyase activity and introduces nicks in the DNA strand. Cleaves the DNA backbone by beta-delta elimination to generate a single-strand break at the site of the removed base with both 3'- and 5'-phosphates. This Methylobacterium sp. (strain 4-46) protein is Formamidopyrimidine-DNA glycosylase.